The primary structure comprises 75 residues: Large ribosomal subunit protein uL30 (75 aa).

This sequence belongs to the universal ribosomal protein uL30 family. In terms of assembly, part of the 50S ribosomal subunit.

The polypeptide is Large ribosomal subunit protein uL30 (Roseiflexus castenholzii (strain DSM 13941 / HLO8)).